We begin with the raw amino-acid sequence, 2531 residues long: METNNNKNIQEDIAIIGFRIPGCQDNTPSELWNNLMNKFSGVGKTTERWSDNYHLSGDINNGNSGLLPLKEWKKFDPAFFGINPTMVSTIDPQQRILLKCTWEALEDAGIDPIKLRGSNTSIFIGCSTGDYLDMVKSNNEIQTNLFGSVNHSLSNRISYCFDFHGASMTIDSACSSSLNTVLLGCQSINQGKSNLCIAGGVNFILDTTIPTAFSFLNILSKNGKCMTYDEGADGFVRGEGAGLVVLKSLKDAIKDGNNIYCIIKGGNTNVDGNGNADKANFFQPSKQSQSDNIKLALESIKKKSMLDIDIDYVETHGTGTPTGDPIEVEGISKVFKENHSPENPLLIGSLKSNIGHMEAASGVTSLIKCCLMFKNKSFAPNVNFQKINPKIKLDEWNIKVVTEAIPFKKNKITSMVVNSFGVTGSNCCLVLTESINNNNNSNVDKITKNEKEYLIPFSANSNQSLKNYIEEVSKIDESLQFEDFVYKQLSNKSTSLFQRFVVTSKDWKELKYKLSQPLPLKEISSSISVKKPNPITVFVFCGQGSQFNKMGLELYNNDKNFRNYIDRFDKKLLEYYGYSVISKLRSIDDNDLITIHDPIIAQPATAILQISLFELYKHWGINPSFIVGHSLGELPMAFCSGMIDFDTVCYLLYHRSLAQSKTNGCGKMLSCNISSEEFVKNYSPRYPFLEIACYNSPNSIVVAGKESILLELSKEFKNSGIFCAMLGSLSSFHTSSQLEVKDHIYSLKFESKEPVIPTFSTVTTHLFNSNKLYDNDYIFQNIMKPVLFNETISNLYKHVENNQLGSEMIFIELAPHQTLSFYLKQLIPKDSNYFSNSNSITILSPLHKKKNDYLEIQQTISTCYCKGYDVNFKSQILIESKTNISNKSLPLYQWDDKEFWKDLEKQKRILQGPPMDTLGFSNEKSPILKSFETKIDIKKKPFQYLKGHIVKGKIYFPGVGYIENLLKMYPSQDIDIDSMEFEAPLILIEGIVTCLQSNVYKIGKNEFKVQFHFQDQKTKQWIQSSFANYHLSHRDDFDPTTNKLNIQNLISNNCNLTKLSKNQFYNFIKAKAGLSYNGEFQGVEKCYLGDNCSLVEIPFDTSNQDVETNINMIPILDSCLHGVHILYVEQCQMVLEKIEGLKYYSSTLILSKQKEQQKLYVFTRIENKDLINNSISASIIVMISDGTVFFEIESVSLKSLIPLKDPISIENPTDELFSSYLQSIDSLISEPSSYKSIYKRNEFISSGMSDLSRSDYQQFISTLLYTNLIKRNQSIESDLRNQIEFEEIKAKYCKNSKFERLFTFVIETIKQYDGINGNLNSWNEGNIDIYKILIKSTRIISKLLFPLQGEDTTIDTPQSLFENNLLDDFYNINGNTVIQNQLVGEIITQSIKPLINEKMVFRILEFGGGVGSLSIVTLNKINQLLEQHPNFQIDIEYTWTDISPSFIPDAKKLLSNIKGVTIIYRSLDLEESLIEKQLLKPSYYDFVIMSNVLHVIKEIKFGIDEIYKVLSPNGQLLFIETPYRMLICDSIFGVFDQWWGFTDTGIRVDRCCMKQKTWFKLLSESNYQDIIMSDDIKDCCFVIQAKKPSISSLEYKLKIDSQENDKIIVFGENDTFMKYLENKSTKQIIKIKTCQQFSDLITSNSKEINNQSIIYFIKTLNQLLIENFKEITLEYIQINQLLLSSGLSCKHILLLNQSTSENYLGSSISGAARYFDEFPPLKLYSFDFDKYSLNNESINIIDDIIEPIIKSMNNSNIRKELLVRNNKIFFERYKQEKRIKENYKSTSFENDKSLFVHLNANLEYELKSKQVKLKQNEIEVNVKATGINYKDYLVYTAMTPSELINHKGESNPEFGHDFSGIITRIGDDDGDNDNEFKVGDQVYGIWFNTTASHIIVDKEFLCHKPSKLSHTIASSIPVVYITSLYSLYNIGNIQNDESILIHSASGGIGLSALNILKWKNHKSHIFVTVGSKEKEKYIHDTYGDFITGIYSSRNKDYLKLIKRKLTELGSNKKGVDIILNTLSSSEHMVSNFKCLNHRGRIIDLSITHLNHNEYTCNNNFKYNYGYHNVEVLFVKGDIISKLLKNITSAIENGSLSTGIPIIEFNDSDCFNAIEFINKRQHIGKIVVNHNKENLIQELIKKTNLPIIKSNYQINSDHLGKNILVTGQSGIILEILKWIVKYSTNVENIIILSRSSLKWELELLVNKNKNKLNFIYKSVDVGNSLEIEKVIDEILMENPQINNVDSIFHYAFTQISCKEHEIDQVHLNVSHQAKTMGAINLHNQSIKRNWKLINFIMASSAAGLIGSTDQCSYVCSSNVLDTFSKYRKHVLGLPSICINYGLIESTGFVSRNQSVAVMLDGQGIRPMQTNQILGSLDLFIQNPSKSTNIILTSFNFNEFATGNLQQSNVHKFDFQFNCCLSQKSKLMANNQASENPVKDLLINNICELLSIDESKLNIDIRLIDYGSDSLTIVQIKNLIDKNLLIPNLISIQMLQNNSISDNIKILTDSYNKKKQNEQNELKNIKVGSFTKK.

A Ketosynthase family 3 (KS3) domain is found at 10 to 433; sequence QEDIAIIGFR…GSNCCLVLTE (424 aa). Catalysis depends on for beta-ketoacyl synthase activity residues cysteine 174, histidine 316, and histidine 356. The tract at residues 620–653 is acyl/malonyl transferase; sequence GINPSFIVGHSLGELPMAFCSGMIDFDTVCYLLY. Residue serine 630 is the For acyl/malonyl transferase activity of the active site. Positions 915-1036 are N-terminal hotdog fold; it reads MDTLGFSNEK…ANYHLSHRDD (122 aa). A PKS/mFAS DH domain is found at 915–1206; sequence MDTLGFSNEK…LKSLIPLKDP (292 aa). Histidine 948 acts as the Proton acceptor; for dehydratase activity in catalysis. Residues 1055-1206 are C-terminal hotdog fold; it reads NLTKLSKNQF…LKSLIPLKDP (152 aa). Aspartate 1117 (proton donor; for dehydratase activity) is an active-site residue. Residues 2431–2509 enclose the Carrier domain; that stretch reads ASENPVKDLL…DNIKILTDSY (79 aa). At serine 2468 the chain carries O-(pantetheine 4'-phosphoryl)serine.

Requires pantetheine 4'-phosphate as cofactor.

Functionally, probable polyketide synthase. The sequence is that of Probable polyketide synthase 26 (pks26) from Dictyostelium discoideum (Social amoeba).